Here is a 156-residue protein sequence, read N- to C-terminus: MSRRHSAEKREVNPDPKFGNIVISKFMNSIMYDGKKSVAENIVYGALDTIEAKTKQSPLSVFEQALENVMPTIEVRSRRVGGATYQVPVEVRSTRRQALGIRWIIAAARGRNEKTMTERLSAELLDASNNRGNAVKKREDVHKMAEANRAFSHYRW.

This sequence belongs to the universal ribosomal protein uS7 family. As to quaternary structure, part of the 30S ribosomal subunit. Contacts proteins S9 and S11.

Its function is as follows. One of the primary rRNA binding proteins, it binds directly to 16S rRNA where it nucleates assembly of the head domain of the 30S subunit. Is located at the subunit interface close to the decoding center, probably blocks exit of the E-site tRNA. The protein is Small ribosomal subunit protein uS7 of Afipia carboxidovorans (strain ATCC 49405 / DSM 1227 / KCTC 32145 / OM5) (Oligotropha carboxidovorans).